The sequence spans 92 residues: Large ribosomal subunit protein bL36m (92 aa).

The transit peptide at 1–54 (MASLGRKFFAVGVLSRVFPSAFNAQKGLLKNASMFLTPAFRLSPSLLPWNFSRG) directs the protein to the mitochondrion.

It belongs to the bacterial ribosomal protein bL36 family. Component of the mitochondrial large ribosomal subunit (mt-LSU). Mature yeast 74S mitochondrial ribosomes consist of a small (37S) and a large (54S) subunit. The 37S small subunit contains a 15S ribosomal RNA (15S mt-rRNA) and at least 32 different proteins. The 54S large subunit contains a 21S rRNA (21S mt-rRNA) and at least 45 different proteins. bL36m has a zinc binding site.

The protein localises to the mitochondrion. Component of the mitochondrial ribosome (mitoribosome), a dedicated translation machinery responsible for the synthesis of mitochondrial genome-encoded proteins, including at least some of the essential transmembrane subunits of the mitochondrial respiratory chain. The mitoribosomes are attached to the mitochondrial inner membrane and translation products are cotranslationally integrated into the membrane. bL36m may be involved in a process influencing telomere capping. The protein is Large ribosomal subunit protein bL36m (rtc6) of Schizosaccharomyces pombe (strain 972 / ATCC 24843) (Fission yeast).